The following is a 212-amino-acid chain: Probable nicotinate-nucleotide adenylyltransferase (212 aa).

This sequence belongs to the NadD family.

It carries out the reaction nicotinate beta-D-ribonucleotide + ATP + H(+) = deamido-NAD(+) + diphosphate. Its pathway is cofactor biosynthesis; NAD(+) biosynthesis; deamido-NAD(+) from nicotinate D-ribonucleotide: step 1/1. In terms of biological role, catalyzes the reversible adenylation of nicotinate mononucleotide (NaMN) to nicotinic acid adenine dinucleotide (NaAD). This chain is Probable nicotinate-nucleotide adenylyltransferase, found in Methylibium petroleiphilum (strain ATCC BAA-1232 / LMG 22953 / PM1).